The chain runs to 831 residues: Multiphosphoryl transfer protein (831 aa).

One can recognise an HPr domain in the interval 1–90; that stretch reads MLTIQFLCPL…EYILVRFIDS (90 aa). Residue histidine 15 is the Pros-phosphohistidine intermediate; for HPr activity of the active site. The residue at position 15 (histidine 15) is a Phosphohistidine; by EI. The PTS EI stretch occupies residues 119–650; it reads GNVLASGVGV…AVKSQLRQLD (532 aa). Histidine 298 acts as the Tele-phosphohistidine intermediate; for PTS EI activity in catalysis. At histidine 298 the chain carries Phosphohistidine; by autocatalysis. Positions 405 and 441 each coordinate phosphoenolpyruvate. Mg(2+)-binding residues include glutamate 540 and aspartate 564. Phosphoenolpyruvate is bound by residues 563–564 and arginine 574; that span reads ND. Cysteine 611 acts as the Proton donor; for EI activity in catalysis. Residues 685-828 enclose the PTS EIIA type-2 domain; it reads PLLALENIFV…QSILTLLETE (144 aa). Histidine 747 (tele-phosphohistidine intermediate; for PTS EIIA activity) is an active-site residue. Position 747 is a phosphohistidine; by HPr (histidine 747).

It belongs to the PEP-utilizing enzyme family. Mg(2+) is required as a cofactor.

It localises to the cytoplasm. It catalyses the reaction L-histidyl-[protein] + phosphoenolpyruvate = N(pros)-phospho-L-histidyl-[protein] + pyruvate. It carries out the reaction D-fructose(out) + N(pros)-phospho-L-histidyl-[protein] = D-fructose 1-phosphate(in) + L-histidyl-[protein]. Functionally, multifunctional protein that includes general (non sugar-specific) and sugar-specific components of the phosphoenolpyruvate-dependent sugar phosphotransferase system (sugar PTS). This major carbohydrate active transport system catalyzes the phosphorylation of incoming sugar substrates concomitantly with their translocation across the cell membrane. The enzyme II FryABC PTS system is involved in fructose transport. This chain is Multiphosphoryl transfer protein (fryA), found in Shigella flexneri.